The following is a 445-amino-acid chain: Oxysterols receptor LXR-alpha (445 aa).

2 disordered regions span residues 1–34 (MSLWLEAAVPDVSPDSATELWKTEPQDAGDQGGN) and 62–86 (TALLPRAETLPEPTELRPQKRKKGP). The segment at 1–94 (MSLWLEAAVP…GPAPKMLGNE (94 aa)) is transactivation AF-1; required for ligand-independent transactivation function. Residues 93-168 (NELCSVCGDK…AGMREECVLS (76 aa)) constitute a DNA-binding region (nuclear receptor). 2 NR C4-type zinc fingers span residues 96-116 (CSVCGDKASAFHYNVLSCEGC) and 132-156 (CHSGGHCPMDTYMRRKCQECRLRKC). Residues 178–200 (KRQEEEQAQATSVSPRVSSPPQV) are disordered. The span at 189–200 (SVSPRVSSPPQV) shows a compositional bias: low complexity. A Phosphoserine modification is found at S191. The transactivation AF-2; required for ligand-dependent transactivation function; mediates interaction with CCAR2 stretch occupies residues 203–445 (QLSPEQLGMI…LLSEIWDVHE (243 aa)). Positions 207 to 445 (EQLGMIEKLV…LLSEIWDVHE (239 aa)) constitute an NR LBD domain.

The protein belongs to the nuclear hormone receptor family. NR1 subfamily. Heterodimer of NR1H3 and RXR (retinoic acid receptor). Interacts with CCAR2 (via N-terminus) in a ligand-independent manner. Interacts with SIRT1 and this interaction is inhibited by CCAR2. Ubiquitinated by UBR5, leading to its degradation: UBR5 specifically recognizes and binds ligand-bound NR1H3 when it is not associated with coactivators (NCOAs). In presence of NCOAs, the UBR5-degron is not accessible, preventing its ubiquitination and degradation. As to expression, in adults it is expressed in spleen, pituitary, lung, liver, and fat. Weaker expression is observed in several other tissues.

It localises to the nucleus. It is found in the cytoplasm. Its function is as follows. Nuclear receptor that exhibits a ligand-dependent transcriptional activation activity. Interaction with retinoic acid receptor (RXR) shifts RXR from its role as a silent DNA-binding partner to an active ligand-binding subunit in mediating retinoid responses through target genes defined by LXRES. LXRES are DR4-type response elements characterized by direct repeats of two similar hexanuclotide half-sites spaced by four nucleotides. Plays an important role in the regulation of cholesterol homeostasis, regulating cholesterol uptake through MYLIP-dependent ubiquitination of LDLR, VLDLR and LRP8. Interplays functionally with RORA for the regulation of genes involved in liver metabolism. Induces LPCAT3-dependent phospholipid remodeling in endoplasmic reticulum (ER) membranes of hepatocytes, driving SREBF1 processing and lipogenesis. Via LPCAT3, triggers the incorporation of arachidonate into phosphatidylcholines of ER membranes, increasing membrane dynamics and enabling triacylglycerols transfer to nascent very low-density lipoprotein (VLDL) particles. Via LPCAT3 also counteracts lipid-induced ER stress response and inflammation, likely by modulating SRC kinase membrane compartmentalization and limiting the synthesis of lipid inflammatory mediators. The sequence is that of Oxysterols receptor LXR-alpha (Nr1h3) from Rattus norvegicus (Rat).